We begin with the raw amino-acid sequence, 394 residues long: Probable cytosolic iron-sulfur protein assembly protein 1 (394 aa).

7 WD repeats span residues 10 to 49, 56 to 108, 144 to 184, 191 to 230, 237 to 284, 313 to 352, and 359 to 394; these read AHND…NFPL, AHKR…EQDS, GHEN…EEFE, DHQH…DDWS, GHGG…TEQI, IHKY…KWEI, and AHGV…IWEP.

This sequence belongs to the WD repeat CIA1 family. As to quaternary structure, interacts with NAR1.

The protein resides in the cytoplasm. It localises to the nucleus. Its function is as follows. Essential component of the cytosolic iron-sulfur (Fe/S) protein assembly machinery. Required for the maturation of extramitochondrial Fe/S proteins. The sequence is that of Probable cytosolic iron-sulfur protein assembly protein 1 from Debaryomyces hansenii (strain ATCC 36239 / CBS 767 / BCRC 21394 / JCM 1990 / NBRC 0083 / IGC 2968) (Yeast).